The sequence spans 373 residues: Putative glutamate--cysteine ligase 2-1 (373 aa).

This sequence belongs to the glutamate--cysteine ligase type 2 family. YbdK subfamily.

The enzyme catalyses L-cysteine + L-glutamate + ATP = gamma-L-glutamyl-L-cysteine + ADP + phosphate + H(+). Functionally, ATP-dependent carboxylate-amine ligase which exhibits weak glutamate--cysteine ligase activity. This is Putative glutamate--cysteine ligase 2-1 from Legionella pneumophila (strain Lens).